A 170-amino-acid chain; its full sequence is MDVTIQHPWFRRALGPFYPSRLFDQFFGEGLFEYDLLPFLSSTISPYYRQSLFRTVLDSGISEVRSDRDKFVIFLDVKHFSPEDLTVKVLDDFVEIHGKHNERQDDHGYISREFHRRYRLPTAVDQSALSCSLSADGMLTFSGPKIVDPSHSERTIPVSREEKPSSAPSS.

The residue at position 1 (M1) is an N-acetylmethionine. Residues M1–E63 are required for complex formation with BFSP1 and BFSP2. Deamidated glutamine; partial is present on Q6. A Phosphoserine modification is found at S45. Q50 carries the deamidated glutamine; partial modification. The region spanning L52–E161 is the sHSP domain. Residues K70 and K99 each carry the N6-acetyllysine modification. H100 contributes to the Zn(2+) binding site. N101 is modified (deamidated asparagine; partial). Positions 102, 107, and 151 each coordinate Zn(2+). Positions P144–S170 are disordered. Residues D148–P164 are compositionally biased toward basic and acidic residues. S159 is a glycosylation site (O-linked (GlcNAc) serine).

It belongs to the small heat shock protein (HSP20) family. In terms of assembly, heteromer composed of three CRYAA and one CRYAB subunits. Inter-subunit bridging via zinc ions enhances stability, which is crucial as there is no protein turn over in the lens. Can also form homodimers and homotetramers (dimers of dimers) which serve as the building blocks of homooligomers. Within homooligomers, the zinc-binding motif is created from residues of 3 different molecules. His-100 and Glu-102 from one molecule are ligands of the zinc ion, and His-107 and His-151 residues from additional molecules complete the site with tetrahedral coordination geometry. Part of a complex required for lens intermediate filament formation composed of BFSP1, BFSP2 and CRYAA. In terms of processing, acetylation at Lys-70 may increase chaperone activity. Undergoes age-dependent proteolytical cleavage at the C-terminus.

It is found in the cytoplasm. Its subcellular location is the nucleus. In terms of biological role, contributes to the transparency and refractive index of the lens. Acts as a chaperone, preventing aggregation of various proteins under a wide range of stress conditions. Required for the correct formation of lens intermediate filaments as part of a complex composed of BFSP1, BFSP2 and CRYAA. This Choloepus hoffmanni (Hoffmann's two-fingered sloth) protein is Alpha-crystallin A chain (CRYAA).